The primary structure comprises 230 residues: Thiamine-triphosphatase (230 aa).

N-acetylalanine is present on alanine 2. Positions 5-201 (LIEVERKFLP…AKLIVYLQRF (197 aa)) constitute a CYTH domain. Mg(2+) is bound by residues glutamate 7 and glutamate 9. Residues lysine 11, arginine 55, arginine 57, lysine 65, and arginine 125 each coordinate substrate. Residues aspartate 145, glutamate 157, and glutamate 159 each contribute to the Mg(2+) site. Residue glutamate 157 coordinates substrate. Lysine 193 is a substrate binding site.

The protein belongs to the ThTPase family. Monomer. The cofactor is Mg(2+).

The protein localises to the cytoplasm. It catalyses the reaction thiamine triphosphate + H2O = thiamine diphosphate + phosphate + H(+). Its function is as follows. Hydrolase highly specific for thiamine triphosphate (ThTP). The polypeptide is Thiamine-triphosphatase (THTPA) (Macaca fascicularis (Crab-eating macaque)).